The primary structure comprises 117 residues: MDKKAARIRRATKARRKMLELGATRLVVHRTPRHIYAQVIAASGAEVLASASTVESTIREQVKYTGNADAAAAVGKAIAERALAKGVTTVAFDRSGFQYHGRVAALAAAAREAGLQF.

This sequence belongs to the universal ribosomal protein uL18 family. Part of the 50S ribosomal subunit; part of the 5S rRNA/L5/L18/L25 subcomplex. Contacts the 5S and 23S rRNAs.

Functionally, this is one of the proteins that bind and probably mediate the attachment of the 5S RNA into the large ribosomal subunit, where it forms part of the central protuberance. This Tolumonas auensis (strain DSM 9187 / NBRC 110442 / TA 4) protein is Large ribosomal subunit protein uL18.